The sequence spans 631 residues: Chaperone protein DnaK (631 aa).

Residue Thr197 is modified to Phosphothreonine; by autocatalysis. The tract at residues Ala599–Lys631 is disordered. A compositionally biased stretch (low complexity) spans Ala603–Glu612.

It belongs to the heat shock protein 70 family.

In terms of biological role, acts as a chaperone. This chain is Chaperone protein DnaK, found in Rickettsia bellii (strain RML369-C).